Consider the following 857-residue polypeptide: Aminopeptidase N (857 aa).

Substrate contacts are provided by residues Glu130 and 264-268 (GAMEN). Position 298 (His298) interacts with Zn(2+). The active-site Proton acceptor is Glu299. 2 residues coordinate Zn(2+): His302 and Glu321.

The protein belongs to the peptidase M1 family. In terms of assembly, monomer. Requires Zn(2+) as cofactor. Post-translationally, the N-terminus is blocked.

The protein localises to the cytoplasm. The catalysed reaction is Release of an N-terminal amino acid, Xaa-|-Yaa- from a peptide, amide or arylamide. Xaa is preferably Ala, but may be most amino acids including Pro (slow action). When a terminal hydrophobic residue is followed by a prolyl residue, the two may be released as an intact Xaa-Pro dipeptide.. Its function is as follows. Aminopeptidase with broad substrate specificity to several peptides. Shows strong preference for leucine but also cleaves next to Arg and Lys in peptide-bond-containing substrates. The polypeptide is Aminopeptidase N (pepN) (Streptomyces lividans).